Reading from the N-terminus, the 3092-residue chain is Inhibitory regulator protein IRA1 (3092 aa).

Disordered stretches follow at residues 375–430 and 450–487; these read HLHH…MASL and LGQANTSTSTTAATTKTDADTPSTMNTNNNNNNNNSAN. Residues 379–400 show a composition bias toward low complexity; that stretch reads SSSSSKTTNTNSPNSISKTSIK. Polar residues predominate over residues 401-430; it reads QSSVNASGNVSPSQFSTGNDASPTSPMASL. Over residues 455–487 the composition is skewed to low complexity; that stretch reads TSTSTTAATTKTDADTPSTMNTNNNNNNNNSAN. Residues S497 and S915 each carry the phosphoserine modification. Disordered stretches follow at residues 946 to 988 and 1003 to 1023; these read SGVP…VLSS and TILKNIKSPKPNKTKKIADDK. The span at 965–988 shows a compositional bias: low complexity; sequence QSPYSSPPQLQQSDLPSPLSVLSS. S1342 is subject to Phosphoserine. A Ras-GAP domain is found at 1725–1930; sequence NASHILVTEL…DKIFNFLSEL (206 aa). S1753 and S3004 each carry phosphoserine; by PKA.

Its subcellular location is the cytoplasm. Its function is as follows. Inhibitory regulator of the Ras-cyclic AMP pathway in S.cerevisiae. Stimulates the GTPase activity of Ras proteins. The chain is Inhibitory regulator protein IRA1 (IRA1) from Saccharomyces cerevisiae (strain ATCC 204508 / S288c) (Baker's yeast).